Here is a 248-residue protein sequence, read N- to C-terminus: Triosephosphate isomerase (248 aa).

Position 9-11 (9-11 (NWK)) interacts with substrate. The active-site Electrophile is the His-101. Catalysis depends on Glu-170, which acts as the Proton acceptor. Substrate is bound by residues Gly-176, Ser-208, and 229–230 (GG).

Belongs to the triosephosphate isomerase family. As to quaternary structure, homodimer.

The protein resides in the cytoplasm. It carries out the reaction D-glyceraldehyde 3-phosphate = dihydroxyacetone phosphate. The protein operates within carbohydrate biosynthesis; gluconeogenesis. Its pathway is carbohydrate degradation; glycolysis; D-glyceraldehyde 3-phosphate from glycerone phosphate: step 1/1. Involved in the gluconeogenesis. Catalyzes stereospecifically the conversion of dihydroxyacetone phosphate (DHAP) to D-glyceraldehyde-3-phosphate (G3P). This is Triosephosphate isomerase from Mycoplasmopsis pulmonis (strain UAB CTIP) (Mycoplasma pulmonis).